Consider the following 652-residue polypeptide: Bifunctional protein ThiO/ThiG (652 aa).

Residues 1-366 form a thiO region; it reads MTRDIVIIGG…HYSRSQKQAS (366 aa). Residues 5-19 and 44-46 each bind FAD; these read IVIIGGGVIGLAIAV and AGM. A glycine-binding site is contributed by Glu-52. Val-173 contributes to the FAD binding site. Glycine contacts are provided by Arg-301 and Arg-327. Residue 325–331 coordinates FAD; the sequence is HYRNGIL. The interval 393–652 is thiG; it reads PLIIAGKSFH…ASSPVTGTIS (260 aa). Catalysis depends on Lys-494, which acts as the Schiff-base intermediate with DXP. 1-deoxy-D-xylulose 5-phosphate-binding positions include Gly-555, 581-582, and 603-604; these read AG and NS.

The protein in the N-terminal section; belongs to the DAO family. ThiO subfamily. It in the C-terminal section; belongs to the ThiG family. In terms of assembly, interacts with ThiH and ThiS. FAD serves as cofactor.

It localises to the cytoplasm. It carries out the reaction glycine + O2 + H2O = glyoxylate + H2O2 + NH4(+). It catalyses the reaction [ThiS sulfur-carrier protein]-C-terminal-Gly-aminoethanethioate + 2-iminoacetate + 1-deoxy-D-xylulose 5-phosphate = [ThiS sulfur-carrier protein]-C-terminal Gly-Gly + 2-[(2R,5Z)-2-carboxy-4-methylthiazol-5(2H)-ylidene]ethyl phosphate + 2 H2O + H(+). It functions in the pathway cofactor biosynthesis; thiamine diphosphate biosynthesis. Catalyzes the FAD-dependent oxidative deamination of glycine. Is essential for thiamine biosynthesis since the oxidation of glycine catalyzed by ThiO generates the glycine imine intermediate (dehydroglycine) required for the biosynthesis of the thiazole ring of thiamine pyrophosphate. In terms of biological role, catalyzes the rearrangement of 1-deoxy-D-xylulose 5-phosphate (DXP) to produce the thiazole phosphate moiety of thiamine. Sulfur is provided by the thiocarboxylate moiety of the carrier protein ThiS. In vitro, sulfur can be provided by H(2)S. The sequence is that of Bifunctional protein ThiO/ThiG (thiO/thiG) from Nostoc sp. (strain PCC 7120 / SAG 25.82 / UTEX 2576).